The chain runs to 409 residues: Phenoxybenzoate dioxygenase subunit alpha (409 aa).

Residues 45 to 149 (WQPVALSADV…VEERYGLVFA (105 aa)) form the Rieske domain. [2Fe-2S] cluster-binding residues include Cys-85, His-87, Cys-104, and His-107. Fe cation contacts are provided by His-210 and His-215.

This sequence belongs to the bacterial ring-hydroxylating dioxygenase alpha subunit family. In terms of assembly, this dioxygenase system consists of two proteins: the alpha subunit (PobA) and a subunit (PobB) that acts as a ferredoxin and a ferredoxin reductase. [2Fe-2S] cluster is required as a cofactor. Fe cation serves as cofactor.

It participates in aromatic compound metabolism; carboxydiphenyl ether degradation. In terms of biological role, degrades exclusively diarylether compounds having carboxyl groups in the 3- or 4-position. Yields a hemiacetal that spontaneously hydrolyzes to phenol and protocatechuate. The polypeptide is Phenoxybenzoate dioxygenase subunit alpha (pobA) (Ectopseudomonas oleovorans (Pseudomonas oleovorans)).